A 185-amino-acid polypeptide reads, in one-letter code: Ribosome-recycling factor (185 aa).

Belongs to the RRF family.

The protein resides in the cytoplasm. Its function is as follows. Responsible for the release of ribosomes from messenger RNA at the termination of protein biosynthesis. May increase the efficiency of translation by recycling ribosomes from one round of translation to another. This Shewanella loihica (strain ATCC BAA-1088 / PV-4) protein is Ribosome-recycling factor.